Here is a 100-residue protein sequence, read N- to C-terminus: ATP synthase subunit g 2, mitochondrial (100 aa).

This sequence belongs to the ATPase g subunit family. In terms of assembly, F-type ATPases have 2 components, CF(1) - the catalytic core - and CF(0) - the membrane proton channel. CF(0) seems to have nine subunits: a, b, c, d, e, f, g, F6 and 8 (or A6L).

It is found in the mitochondrion membrane. Its function is as follows. Mitochondrial membrane ATP synthase (F(1)F(0) ATP synthase or Complex V) produces ATP from ADP in the presence of a proton gradient across the membrane which is generated by electron transport complexes of the respiratory chain. F-type ATPases consist of two structural domains, F(1) - containing the extramembraneous catalytic core, and F(0) - containing the membrane proton channel, linked together by a central stalk and a peripheral stalk. During catalysis, ATP synthesis in the catalytic domain of F(1) is coupled via a rotary mechanism of the central stalk subunits to proton translocation. Part of the complex F(0) domain. Minor subunit located with subunit a in the membrane. This Homo sapiens (Human) protein is ATP synthase subunit g 2, mitochondrial.